Reading from the N-terminus, the 311-residue chain is Vomeronasal type-1 receptor 105 (311 aa).

The Extracellular segment spans residues 1-17; that stretch reads MMNKNSRLYTDSNIRNT. Residues 18–38 traverse the membrane as a helical segment; it reads FFAEIGIGVSANSLLLLFNIF. Over 39–50 the chain is Cytoplasmic; sequence KLICGQRSRLTD. Residues 51–71 form a helical membrane-spanning segment; that stretch reads LPIGLLSLINLLMLLMTAFIA. Residues 72–94 are Extracellular-facing; the sequence is TDTFISWRGWDDIICKSLLYLYR. Cys-86 and Cys-173 are disulfide-bonded. The helical transmembrane segment at 95–115 threads the bilayer; it reads TFRGLSLCTSCLLSVLQAIIL. The Cytoplasmic portion of the chain corresponds to 116-135; it reads SPRSSCLAKFKHKPSHHISC. The chain crosses the membrane as a helical span at residues 136–156; it reads AILSLSVLYMFISSHLLVSII. Residues 157 to 188 lie on the Extracellular side of the membrane; it reads ATPNLTTNDFIHVTQWCSILPMSYLMQSMFST. Asn-160 carries N-linked (GlcNAc...) asparagine glycosylation. The chain crosses the membrane as a helical span at residues 189-209; it reads LLAIRDVFLISLMVLSTWYMV. At 210 to 239 the chain is on the cytoplasmic side; it reads ALLCRHRKQTRHLQGTSLSPKASPEQRATR. A helical membrane pass occupies residues 240-260; it reads SILMLMSLFVLMSVFDSIVCS. At 261 to 271 the chain is on the extracellular side; sequence SRTMYLNDPIS. A helical transmembrane segment spans residues 272–292; it reads YSYQLFMVHIYATVSPFVFIV. At 293–311 the chain is on the cytoplasmic side; the sequence is TEKHIVNSLRSMCVKVMNV.

This sequence belongs to the G-protein coupled receptor 1 family. As to expression, expressed in 1-4% of neurons of the vomeronasal organ. Only one pheromone receptor gene may be expressed in a particular neuron. Not expressed in the main olfactory epithelium.

The protein localises to the cell membrane. Its function is as follows. Putative pheromone receptor implicated in the regulation of social as well as reproductive behavior. This is Vomeronasal type-1 receptor 105 (Vom1r105) from Rattus norvegicus (Rat).